Reading from the N-terminus, the 293-residue chain is ATP phosphoribosyltransferase (293 aa).

Belongs to the ATP phosphoribosyltransferase family. Long subfamily. Requires Mg(2+) as cofactor.

It localises to the cytoplasm. The catalysed reaction is 1-(5-phospho-beta-D-ribosyl)-ATP + diphosphate = 5-phospho-alpha-D-ribose 1-diphosphate + ATP. Its pathway is amino-acid biosynthesis; L-histidine biosynthesis; L-histidine from 5-phospho-alpha-D-ribose 1-diphosphate: step 1/9. With respect to regulation, feedback inhibited by histidine. In terms of biological role, catalyzes the condensation of ATP and 5-phosphoribose 1-diphosphate to form N'-(5'-phosphoribosyl)-ATP (PR-ATP). Has a crucial role in the pathway because the rate of histidine biosynthesis seems to be controlled primarily by regulation of HisG enzymatic activity. This chain is ATP phosphoribosyltransferase, found in Nitratidesulfovibrio vulgaris (strain DSM 19637 / Miyazaki F) (Desulfovibrio vulgaris).